The chain runs to 468 residues: Intramembrane protease 2 (468 aa).

The Lumenal segment spans residues 1-22; that stretch reads MAEAATEIPPTASNVTVFTFEE. An N-linked (GlcNAc...) asparagine glycan is attached at asparagine 14. The chain crosses the membrane as a helical span at residues 23–43; it reads QATSSLALYGMSILCIIIGSI. Topologically, residues 44-70 are cytoplasmic; sequence RSAQYIRTNIDKKRLIEGSITMREARK. A helical transmembrane segment spans residues 71-91; that stretch reads FPISASLVLFGLYLFFKPAAE. Residues 92 to 168 lie on the Lumenal side of the membrane; the sequence is RFLWVARVFQ…TNLPTIQKAE (77 aa). N-linked (GlcNAc...) asparagine glycans are attached at residues asparagine 114 and asparagine 123. Residues 169–189 traverse the membrane as a helical segment; the sequence is CMQLLTFLICFEGVNAFASLL. Topologically, residues 190–247 are cytoplasmic; that stretch reads KPFVTAFLKKMPLVPSFLRFNAPYLFSLKKGNKEMEEGDIEDAKKKETEYLFKIDFDR. A helical membrane pass occupies residues 248–265; the sequence is YDIIALLMCSPILISHLL. Over 266–267 the chain is Lumenal; sequence KR. A helical membrane pass occupies residues 268–284; sequence HWITNNIIGVSFSILGI. Residues 285 to 296 lie on the Cytoplasmic side of the membrane; sequence ERLHLASFKAGS. A helical membrane pass occupies residues 297–317; it reads LLLVGLFFYDIFWVFGTDVMT. The active site involves aspartate 306. At 318–343 the chain is on the lumenal side; it reads SVAKGIDAPILLQFPQDIYRNGIMEA. A helical membrane pass occupies residues 344–364; that stretch reads SKHSMLGLGDIVIPGIFIALL. Residue aspartate 353 is part of the active site. The Cytoplasmic portion of the chain corresponds to 365–388; the sequence is RRFDYRVVQTTAESKAPQGSLKGR. A helical membrane pass occupies residues 389-409; the sequence is YYFVVTVVAYMAGLFITMAVM. At 410–415 the chain is on the lumenal side; sequence HHFKAA. A helical membrane pass occupies residues 416-436; that stretch reads QPALLYLVPCCLFVPLLLAVI. The short motif at 417-419 is the PAL element; the sequence is PAL. At 437-468 the chain is on the cytoplasmic side; that stretch reads RGELSALWNYDESRHVDNEENRKKVDSGKKNN.

The protein belongs to the peptidase A22B family.

Its subcellular location is the membrane. The protein resides in the endoplasmic reticulum membrane. Functionally, acts as intramembrane protease. In larvae, required for the complete shedding of the cuticle during molting, possibly by regulating cholesterol uptake via lrp-1. Involved in embryonic and larval development. This chain is Intramembrane protease 2, found in Caenorhabditis elegans.